A 273-amino-acid chain; its full sequence is 4-hydroxy-tetrahydrodipicolinate reductase (273 aa).

NAD(+) is bound by residues 12-17 (GAGGRM) and Glu-38. Arg-39 contributes to the NADP(+) binding site. Residues 102–104 (GTT) and 126–129 (AANF) contribute to the NAD(+) site. Catalysis depends on His-159, which acts as the Proton donor/acceptor. Position 160 (His-160) interacts with (S)-2,3,4,5-tetrahydrodipicolinate. Lys-163 serves as the catalytic Proton donor. Residue 169 to 170 (GT) coordinates (S)-2,3,4,5-tetrahydrodipicolinate.

This sequence belongs to the DapB family. As to quaternary structure, homotetramer.

It localises to the cytoplasm. The catalysed reaction is (S)-2,3,4,5-tetrahydrodipicolinate + NAD(+) + H2O = (2S,4S)-4-hydroxy-2,3,4,5-tetrahydrodipicolinate + NADH + H(+). It carries out the reaction (S)-2,3,4,5-tetrahydrodipicolinate + NADP(+) + H2O = (2S,4S)-4-hydroxy-2,3,4,5-tetrahydrodipicolinate + NADPH + H(+). It functions in the pathway amino-acid biosynthesis; L-lysine biosynthesis via DAP pathway; (S)-tetrahydrodipicolinate from L-aspartate: step 4/4. In terms of biological role, catalyzes the conversion of 4-hydroxy-tetrahydrodipicolinate (HTPA) to tetrahydrodipicolinate. The chain is 4-hydroxy-tetrahydrodipicolinate reductase from Salmonella agona (strain SL483).